The following is a 78-amino-acid chain: Ferredoxin oxidoreductase 2 subunit ForD (78 aa).

2 4Fe-4S ferredoxin-type domains span residues 3-35 (FVAD…FKAS) and 37-66 (NSAW…HCIE). Cys-12, Cys-17, Cys-20, Cys-24, Cys-46, Cys-49, Cys-52, and Cys-56 together coordinate [4Fe-4S] cluster.

Heterotetramer of one alpha, one beta, one delta and one gamma chain. [4Fe-4S] cluster serves as cofactor.

The protein is Ferredoxin oxidoreductase 2 subunit ForD (forD2) of Aquifex aeolicus (strain VF5).